The sequence spans 172 residues: Small ribosomal subunit protein uS5 (172 aa).

The 64-residue stretch at 17–80 (LREKMIAINR…EEARRNLAKI (64 aa)) folds into the S5 DRBM domain.

Belongs to the universal ribosomal protein uS5 family. In terms of assembly, part of the 30S ribosomal subunit. Contacts proteins S4 and S8.

Functionally, with S4 and S12 plays an important role in translational accuracy. In terms of biological role, located at the back of the 30S subunit body where it stabilizes the conformation of the head with respect to the body. This chain is Small ribosomal subunit protein uS5, found in Variovorax paradoxus (strain S110).